Here is a 510-residue protein sequence, read N- to C-terminus: 2,3-bisphosphoglycerate-independent phosphoglycerate mutase (510 aa).

Positions 13 and 63 each coordinate Mn(2+). The active-site Phosphoserine intermediate is Ser-63. Residues His-124, 154-155 (RD), Arg-186, Arg-192, 262-265 (RADR), and Lys-334 each bind substrate. Mn(2+) contacts are provided by Asp-401, His-405, Asp-442, His-443, and His-461.

The protein belongs to the BPG-independent phosphoglycerate mutase family. As to quaternary structure, monomer. Mn(2+) is required as a cofactor.

The catalysed reaction is (2R)-2-phosphoglycerate = (2R)-3-phosphoglycerate. It functions in the pathway carbohydrate degradation; glycolysis; pyruvate from D-glyceraldehyde 3-phosphate: step 3/5. Catalyzes the interconversion of 2-phosphoglycerate and 3-phosphoglycerate. The sequence is that of 2,3-bisphosphoglycerate-independent phosphoglycerate mutase from Vibrio vulnificus (strain YJ016).